A 236-amino-acid polypeptide reads, in one-letter code: 2-phospho-L-lactate guanylyltransferase (236 aa).

This sequence belongs to the CofC family. As to quaternary structure, homodimer.

The catalysed reaction is (2S)-2-phospholactate + GTP + H(+) = (2S)-lactyl-2-diphospho-5'-guanosine + diphosphate. It functions in the pathway cofactor biosynthesis; coenzyme F420 biosynthesis. Its function is as follows. Guanylyltransferase that catalyzes the activation of (2S)-2-phospholactate (2-PL) as (2S)-lactyl-2-diphospho-5'-guanosine, via the condensation of 2-PL with GTP. It is involved in the biosynthesis of coenzyme F420, a hydride carrier cofactor. In Natrialba magadii (strain ATCC 43099 / DSM 3394 / CCM 3739 / CIP 104546 / IAM 13178 / JCM 8861 / NBRC 102185 / NCIMB 2190 / MS3) (Natronobacterium magadii), this protein is 2-phospho-L-lactate guanylyltransferase.